Reading from the N-terminus, the 293-residue chain is NAD kinase (293 aa).

Asp73 serves as the catalytic Proton acceptor. NAD(+) is bound by residues 73-74, His78, 147-148, Arg158, Arg175, Asp177, 188-193, and Gln248; these read DG, ND, and TAYALS.

It belongs to the NAD kinase family. A divalent metal cation serves as cofactor.

It localises to the cytoplasm. The catalysed reaction is NAD(+) + ATP = ADP + NADP(+) + H(+). Its function is as follows. Involved in the regulation of the intracellular balance of NAD and NADP, and is a key enzyme in the biosynthesis of NADP. Catalyzes specifically the phosphorylation on 2'-hydroxyl of the adenosine moiety of NAD to yield NADP. This Nitrosococcus oceani (strain ATCC 19707 / BCRC 17464 / JCM 30415 / NCIMB 11848 / C-107) protein is NAD kinase.